Here is a 169-residue protein sequence, read N- to C-terminus: Cell division inhibitor SulA (169 aa).

Residues 106 to 112 (ALRTGNY) form a ftsZ binding region. Positions 162-169 (KIHSNLYH) are lon protease binding.

It belongs to the SulA family. In terms of assembly, interacts with FtsZ. In terms of processing, is rapidly cleaved and degraded by the Lon protease once DNA damage is repaired.

Component of the SOS system and an inhibitor of cell division. Accumulation of SulA causes rapid cessation of cell division and the appearance of long, non-septate filaments. In the presence of GTP, binds a polymerization-competent form of FtsZ in a 1:1 ratio, thus inhibiting FtsZ polymerization and therefore preventing it from participating in the assembly of the Z ring. This mechanism prevents the premature segregation of damaged DNA to daughter cells during cell division. The protein is Cell division inhibitor SulA of Shigella boydii serotype 4 (strain Sb227).